We begin with the raw amino-acid sequence, 162 residues long: MLNQLENLMERVGGSNKLVDRWLDVRKHLLVAYYNLVGIKPGKESYMRLNEKALDDFCQSLVDYLSAGHFSIYERILHKLEGNGQLLHAAKIWPLLEDNTQRIMDYYDTSLETAIDHDNCLEFQQALSDIGEALEARFVLEDKLIMLVFDAMHDGARVKRPA.

This sequence belongs to the Rsd/AlgQ family. Interacts with RpoD.

The protein resides in the cytoplasm. Binds RpoD and negatively regulates RpoD-mediated transcription activation by preventing the interaction between the primary sigma factor RpoD with the catalytic core of the RNA polymerase and with promoter DNA. May be involved in replacement of the RNA polymerase sigma subunit from RpoD to RpoS during the transition from exponential growth to the stationary phase. The sequence is that of Regulator of sigma D from Salmonella typhi.